Here is a 231-residue protein sequence, read N- to C-terminus: Coproheme decarboxylase (231 aa).

Lysine 44 participates in a covalent cross-link: Isoglutamyl lysine isopeptide (Lys-Gln) (interchain with Q-Cter in protein Pup). Tyrosine 133 is a catalytic residue. A Fe-coproporphyrin III-binding site is contributed by histidine 156.

It belongs to the ChdC family. Type 2 subfamily. It depends on Fe-coproporphyrin III as a cofactor.

It catalyses the reaction Fe-coproporphyrin III + 2 H2O2 + 2 H(+) = heme b + 2 CO2 + 4 H2O. The enzyme catalyses Fe-coproporphyrin III + H2O2 + H(+) = harderoheme III + CO2 + 2 H2O. The catalysed reaction is harderoheme III + H2O2 + H(+) = heme b + CO2 + 2 H2O. It participates in porphyrin-containing compound metabolism; protoheme biosynthesis. Involved in coproporphyrin-dependent heme b biosynthesis. Catalyzes the decarboxylation of Fe-coproporphyrin III (coproheme) to heme b (protoheme IX), the last step of the pathway. The reaction occurs in a stepwise manner with a three-propionate intermediate. The sequence is that of Coproheme decarboxylase from Mycolicibacterium smegmatis (strain ATCC 700084 / mc(2)155) (Mycobacterium smegmatis).